A 417-amino-acid polypeptide reads, in one-letter code: Serine hydroxymethyltransferase (417 aa).

(6S)-5,6,7,8-tetrahydrofolate-binding positions include Leu122 and 126–128 (GHL). Lys230 is modified (N6-(pyridoxal phosphate)lysine). 355–357 (SPF) lines the (6S)-5,6,7,8-tetrahydrofolate pocket.

It belongs to the SHMT family. As to quaternary structure, homodimer. The cofactor is pyridoxal 5'-phosphate.

Its subcellular location is the cytoplasm. It catalyses the reaction (6R)-5,10-methylene-5,6,7,8-tetrahydrofolate + glycine + H2O = (6S)-5,6,7,8-tetrahydrofolate + L-serine. It functions in the pathway one-carbon metabolism; tetrahydrofolate interconversion. The protein operates within amino-acid biosynthesis; glycine biosynthesis; glycine from L-serine: step 1/1. Functionally, catalyzes the reversible interconversion of serine and glycine with tetrahydrofolate (THF) serving as the one-carbon carrier. This reaction serves as the major source of one-carbon groups required for the biosynthesis of purines, thymidylate, methionine, and other important biomolecules. Also exhibits THF-independent aldolase activity toward beta-hydroxyamino acids, producing glycine and aldehydes, via a retro-aldol mechanism. In Francisella tularensis subsp. tularensis (strain FSC 198), this protein is Serine hydroxymethyltransferase.